A 490-amino-acid polypeptide reads, in one-letter code: Aspartyl/glutamyl-tRNA(Asn/Gln) amidotransferase subunit B (490 aa).

This sequence belongs to the GatB/GatE family. GatB subfamily. Heterotrimer of A, B and C subunits.

The catalysed reaction is L-glutamyl-tRNA(Gln) + L-glutamine + ATP + H2O = L-glutaminyl-tRNA(Gln) + L-glutamate + ADP + phosphate + H(+). The enzyme catalyses L-aspartyl-tRNA(Asn) + L-glutamine + ATP + H2O = L-asparaginyl-tRNA(Asn) + L-glutamate + ADP + phosphate + 2 H(+). In terms of biological role, allows the formation of correctly charged Asn-tRNA(Asn) or Gln-tRNA(Gln) through the transamidation of misacylated Asp-tRNA(Asn) or Glu-tRNA(Gln) in organisms which lack either or both of asparaginyl-tRNA or glutaminyl-tRNA synthetases. The reaction takes place in the presence of glutamine and ATP through an activated phospho-Asp-tRNA(Asn) or phospho-Glu-tRNA(Gln). In Burkholderia ambifaria (strain MC40-6), this protein is Aspartyl/glutamyl-tRNA(Asn/Gln) amidotransferase subunit B.